The chain runs to 183 residues: NADH-quinone oxidoreductase subunit A (183 aa).

The next 3 membrane-spanning stretches (helical) occupy residues 11-31, 63-83, and 98-118; these read IIAF…VPLL, FYLV…LYAW, and MVIF…TGAL. Positions 160-183 are disordered; sequence GHIPAQSSGRMKSKTSTAPSSKQE. Polar residues predominate over residues 164–183; that stretch reads AQSSGRMKSKTSTAPSSKQE.

Belongs to the complex I subunit 3 family. NDH-1 is composed of 14 different subunits. Subunits NuoA, H, J, K, L, M, N constitute the membrane sector of the complex.

The protein resides in the cell inner membrane. The catalysed reaction is a quinone + NADH + 5 H(+)(in) = a quinol + NAD(+) + 4 H(+)(out). NDH-1 shuttles electrons from NADH, via FMN and iron-sulfur (Fe-S) centers, to quinones in the respiratory chain. The immediate electron acceptor for the enzyme in this species is believed to be ubiquinone. Couples the redox reaction to proton translocation (for every two electrons transferred, four hydrogen ions are translocated across the cytoplasmic membrane), and thus conserves the redox energy in a proton gradient. The sequence is that of NADH-quinone oxidoreductase subunit A from Acinetobacter baylyi (strain ATCC 33305 / BD413 / ADP1).